The sequence spans 240 residues: Uridylate kinase (240 aa).

An ATP-binding site is contributed by 13–16; sequence KLSG. Residues 21 to 26 form an involved in allosteric activation by GTP region; that stretch reads GEQGYG. Gly55 contacts UMP. 2 residues coordinate ATP: Gly56 and Arg60. UMP-binding positions include Asp75 and 137 to 144; that span reads TGNPFFST. The ATP site is built by Thr164, Tyr170, and Asp173.

The protein belongs to the UMP kinase family. In terms of assembly, homohexamer.

The protein resides in the cytoplasm. It carries out the reaction UMP + ATP = UDP + ADP. It functions in the pathway pyrimidine metabolism; CTP biosynthesis via de novo pathway; UDP from UMP (UMPK route): step 1/1. With respect to regulation, allosterically activated by GTP. Inhibited by UTP. In terms of biological role, catalyzes the reversible phosphorylation of UMP to UDP. The chain is Uridylate kinase from Aquifex aeolicus (strain VF5).